A 208-amino-acid chain; its full sequence is Protein-L-isoaspartate O-methyltransferase (208 aa).

Residue serine 59 is part of the active site.

The protein belongs to the methyltransferase superfamily. L-isoaspartyl/D-aspartyl protein methyltransferase family.

The protein localises to the cytoplasm. The catalysed reaction is [protein]-L-isoaspartate + S-adenosyl-L-methionine = [protein]-L-isoaspartate alpha-methyl ester + S-adenosyl-L-homocysteine. In terms of biological role, catalyzes the methyl esterification of L-isoaspartyl residues in peptides and proteins that result from spontaneous decomposition of normal L-aspartyl and L-asparaginyl residues. It plays a role in the repair and/or degradation of damaged proteins. This is Protein-L-isoaspartate O-methyltransferase from Escherichia coli O1:K1 / APEC.